The primary structure comprises 591 residues: Frizzled-9 (591 aa).

Positions M1–A22 are cleaved as a signal peptide. The Extracellular portion of the chain corresponds to L23 to D229. The FZ domain maps to R34–A155. Disulfide bonds link C39–C100, C47–C93, C84–C122, C111–C152, and C115–C139. N53 carries an N-linked (GlcNAc...) asparagine glycan. Positions P58–M172 are required for Wnt-activated receptor activity. A glycan (N-linked (GlcNAc...) asparagine) is linked at N158. The chain crosses the membrane as a helical span at residues F230–V250. The Cytoplasmic segment spans residues L251–P266. The chain crosses the membrane as a helical span at residues I267–A287. Residues G288 to L315 are Extracellular-facing. A helical transmembrane segment spans residues V316–L336. Residues T337 to G355 are Cytoplasmic-facing. Residues S356 to L376 form a helical membrane-spanning segment. Residues R377 to G400 are Extracellular-facing. The chain crosses the membrane as a helical span at residues F401–F421. Over V422–K447 the chain is Cytoplasmic. The chain crosses the membrane as a helical span at residues I448–Y468. The Extracellular portion of the chain corresponds to E469–A508. A helical transmembrane segment spans residues V509–W529. The Cytoplasmic segment spans residues S530–L591. The short motif at K532–W537 is the Lys-Thr-X-X-X-Trp motif, mediates interaction with the PDZ domain of Dvl family members element. The tract at residues A554–L591 is required for CTNNB1 accumulation and TCF transcription factor activity.

It belongs to the G-protein coupled receptor Fz/Smo family. Post-translationally, ubiquitinated by ZNRF3, leading to its degradation by the proteasome. Expressed predominantly in adult and fetal brain, testis, eye, skeletal muscle and kidney. Moderately expressed in pancreas, thyroid, adrenal cortex, small intestine and stomach. Detected in fetal liver and kidney. Expressed in neural progenitor cells.

It localises to the cell membrane. Receptor for WNT2 that is coupled to the beta-catenin canonical signaling pathway, which leads to the activation of disheveled proteins, inhibition of GSK-3 kinase, nuclear accumulation of beta-catenin and activation of Wnt target genes. Plays a role in neuromuscular junction (NMJ) assembly by negatively regulating the clustering of acetylcholine receptors (AChR) through the beta-catenin canonical signaling pathway. May play a role in neural progenitor cells (NPCs) viability through the beta-catenin canonical signaling pathway by negatively regulating cell cycle arrest leading to inhibition of neuron apoptotic process. During hippocampal development, regulates neuroblast proliferation and apoptotic cell death. Controls bone formation through non canonical Wnt signaling mediated via ISG15. Positively regulates bone regeneration through non canonical Wnt signaling. This Homo sapiens (Human) protein is Frizzled-9 (FZD9).